We begin with the raw amino-acid sequence, 205 residues long: Small ribosomal subunit protein uS4 (205 aa).

The interval 19–45 (IWGRSKSPVNRREYGPGQHGQRRKGKL) is disordered. An S4 RNA-binding domain is found at 94–157 (RRLDAVVYRA…KQMALVLEAV (64 aa)).

It belongs to the universal ribosomal protein uS4 family. In terms of assembly, part of the 30S ribosomal subunit. Contacts protein S5. The interaction surface between S4 and S5 is involved in control of translational fidelity.

One of the primary rRNA binding proteins, it binds directly to 16S rRNA where it nucleates assembly of the body of the 30S subunit. Functionally, with S5 and S12 plays an important role in translational accuracy. The protein is Small ribosomal subunit protein uS4 of Azorhizobium caulinodans (strain ATCC 43989 / DSM 5975 / JCM 20966 / LMG 6465 / NBRC 14845 / NCIMB 13405 / ORS 571).